The following is a 205-amino-acid chain: MGTKWSKSSLVGWPEVRRRIREAPTAAEGVGEVSKDLERHGAITSRNTPETNQTLAWLEEMDNEEVGFPVRPQVPTRPMTYKAAFDLSHFLKEKGGLEGLVYSRRRQEILDLWVYHTQGFFPDWQNYTTGPGTRFPLCFGWCFKLVPLTEEQVEQANEGDNNCLLHPICQHGMEDEDKEVLVWRFDSRLALRHIAREQHPEYYKD.

Gly-2 carries the N-myristoyl glycine; by host lipid modification. Ser-6 carries the post-translational modification Phosphoserine; by host. Positions 62–65 are acidic; interacts with host PACS1 and PACS2; stabilizes the interaction of NEF/MHC-I with host AP1M1; necessary for MHC-I internalization; it reads DNEE. Positions 69 to 78 are SH3-binding; interaction with Src family tyrosine kinases; sequence PVRPQVPTRP. Residues 72–75 carry the PxxP; stabilizes the interaction of NEF/MHC-I with host AP1M1; necessary for MHC-I internalization motif; sequence PQVP. Positions 108-124 are mediates dimerization, Nef-PTE1 interaction; sequence EILDLWVYHTQGFFPDW. A binding to ATP6V1H region spans residues 148–180; the sequence is LTEEQVEQANEGDNNCLLHPICQHGMEDEDKEV. A Dileucine internalization motif; necessary for CD4 internalization motif is present at residues 164–165; the sequence is LL. A Diacidic; necessary for CD4 internalization motif is present at residues 174-175; that stretch reads ED.

Belongs to the lentivirus primate group Nef protein family. As to quaternary structure, monomer; cytosolic form. Homodimer; membrane bound form. Interacts with Nef associated p21-activated kinase (PAK2); this interaction activates PAK2. Associates with the Nef-MHC-I-AP1 complex; this complex is required for MHC-I internalization. Interacts (via C-terminus) with host PI3-kinase. Interacts with host PACS1; this interaction seems to be weak. Interacts with host PACS2. Interacts with host LCK and MAPK3; these interactions inhibit the kinase activity of the latter. Interacts with host ATP6V1H; this interaction may play a role in CD4 endocytosis. Associates with the CD4-Nef-AP2 complex; this complex is required for CD4 internalization. Interacts with host AP2 subunit alpha and AP2 subunit sigma2. Interacts with TCR-zeta chain; this interaction up-regulates the Fas ligand (FasL) surface expression. Interacts with host HCK, LYN, and SRC; these interactions activate the Src family kinases. Interacts with MAP3K5; this interaction inhibits the Fas and TNFR-mediated death signals. Interacts with beta-COP and PTE1. Interacts with human RACK1; this increases Nef phosphorylation by PKC. Interacts with TP53; this interaction decreases the half-life of TP53, protecting the infected cell against p53-mediated apoptosis. In terms of processing, the virion-associated Nef proteins are cleaved by the viral protease to release the soluble C-terminal core protein. Nef is probably cleaved concomitantly with viral structural proteins on maturation of virus particles. Myristoylated. Post-translationally, phosphorylated on serine residues, probably by host PKCdelta and theta.

The protein resides in the host cell membrane. It is found in the virion. Its subcellular location is the secreted. It localises to the host Golgi apparatus membrane. Factor of infectivity and pathogenicity, required for optimal virus replication. Alters numerous pathways of T-lymphocyte function and down-regulates immunity surface molecules in order to evade host defense and increase viral infectivity. Alters the functionality of other immunity cells, like dendritic cells, monocytes/macrophages and NK cells. Functionally, in infected CD4(+) T-lymphocytes, down-regulates the surface MHC-I, mature MHC-II, CD4, CD28, CCR5 and CXCR4 molecules. Mediates internalization and degradation of host CD4 through the interaction of with the cytoplasmic tail of CD4, the recruitment of AP-2 (clathrin adapter protein complex 2), internalization through clathrin coated pits, and subsequent transport to endosomes and lysosomes for degradation. Diverts host MHC-I molecules to the trans-Golgi network-associated endosomal compartments by an endocytic pathway to finally target them for degradation. MHC-I down-regulation may involve AP-1 (clathrin adapter protein complex 1) or possibly Src family kinase-ZAP70/Syk-PI3K cascade recruited by PACS2. In consequence infected cells are masked for immune recognition by cytotoxic T-lymphocytes. Decreasing the number of immune receptors also prevents reinfection by more HIV particles (superinfection). Down-regulates host SERINC3 and SERINC5 thereby excluding these proteins from the viral particles. Virion infectivity is drastically higher when SERINC3 or SERINC5 are excluded from the viral envelope, because these host antiviral proteins impair the membrane fusion event necessary for subsequent virion penetration. In terms of biological role, bypasses host T-cell signaling by inducing a transcriptional program nearly identical to that of anti-CD3 cell activation. Interaction with TCR-zeta chain up-regulates the Fas ligand (FasL). Increasing surface FasL molecules and decreasing surface MHC-I molecules on infected CD4(+) cells send attacking cytotoxic CD8+ T-lymphocytes into apoptosis. Its function is as follows. Plays a role in optimizing the host cell environment for viral replication without causing cell death by apoptosis. Protects the infected cells from apoptosis in order to keep them alive until the next virus generation is ready to strike. Inhibits the Fas and TNFR-mediated death signals by blocking MAP3K5/ASK1. Decreases the half-life of TP53, protecting the infected cell against p53-mediated apoptosis. Inhibits the apoptotic signals regulated by the Bcl-2 family proteins through the formation of a Nef/PI3-kinase/PAK2 complex that leads to activation of PAK2 and induces phosphorylation of host BAD. Extracellular Nef protein targets CD4(+) T-lymphocytes for apoptosis by interacting with CXCR4 surface receptors. In Simian immunodeficiency virus (isolate CPZ GAB1) (SIV-cpz), this protein is Protein Nef.